The sequence spans 550 residues: Chaperonin GroEL (550 aa).

ATP-binding positions include 30 to 33 (TLGP), K51, 87 to 91 (DGTTT), G415, and D495.

The protein belongs to the chaperonin (HSP60) family. As to quaternary structure, forms a cylinder of 14 subunits composed of two heptameric rings stacked back-to-back. Interacts with the co-chaperonin GroES.

Its subcellular location is the cytoplasm. The catalysed reaction is ATP + H2O + a folded polypeptide = ADP + phosphate + an unfolded polypeptide.. Functionally, together with its co-chaperonin GroES, plays an essential role in assisting protein folding. The GroEL-GroES system forms a nano-cage that allows encapsulation of the non-native substrate proteins and provides a physical environment optimized to promote and accelerate protein folding. This chain is Chaperonin GroEL, found in Dechloromonas aromatica (strain RCB).